Consider the following 244-residue polypeptide: DnaJ homolog subfamily C member 4 (244 aa).

One can recognise a J domain in the interval 37-102; it reads NYYELLGVHP…ESRRNYDHQL (66 aa). The tract at residues 96 to 127 is disordered; the sequence is RNYDHQLHSASPPKSSGSTAEPKYTQQTHSSW. The segment covering 103–127 has biased composition (polar residues); sequence HSASPPKSSGSTAEPKYTQQTHSSW. A helical transmembrane segment spans residues 159-178; it reads VLGYCLLLMVAGMGLHYVAF. The segment at 208–244 is disordered; it reads RANRARIQQERQQRQQPRAEPSLPPESSRIMPQDTSP.

The protein resides in the membrane. The polypeptide is DnaJ homolog subfamily C member 4 (Dnajc4) (Mus musculus (Mouse)).